The primary structure comprises 674 residues: Polyunsaturated fatty acid 5-lipoxygenase (674 aa).

Positions 2 to 118 constitute a PLAT domain; sequence PSYTVTVATG…EIVLRDGRAK (117 aa). Ca(2+)-binding residues include glycine 17, threonine 18, aspartate 19, asparagine 44, aspartate 45, glutamate 47, aspartate 79, and aspartate 80. Positions 119–674 constitute a Lipoxygenase domain; that stretch reads LARDDQIHIL…PDRIPNSVAI (556 aa). Serine 272 bears the Phosphoserine mark. Fe cation-binding residues include histidine 368 and histidine 373. Phosphoserine is present on serine 524. Fe cation-binding residues include histidine 551, asparagine 555, and isoleucine 674.

It belongs to the lipoxygenase family. As to quaternary structure, homodimer. Interacts with ALOX5AP and LTC4S. Interacts with COTL1, the interaction is required for stability and efficient catalytic activity. Interacts with PIK3R1; this interaction bridges ALOX5 with CD40 after CD40 ligation in B cells and leads to the production of reactive oxygen species (ROS). Interacts (via PLAT domain) with DICER1 (via Dicer dsRNA-binding fold domain); this interaction enhances arachidonate 5-lipoxygenase activity and modifies the miRNA precursor processing activity of DICER1. The cofactor is Fe cation. Serine phosphorylation by MAPKAPK2 is stimulated by arachidonic acid. Phosphorylation on Ser-524 by PKA has an inhibitory effect. Phosphorylation on Ser-272 prevents export from the nucleus. Phosphorylation at Ser-524 is stimulated by 8-bromo-3',5'-cyclic AMP or prostaglandin E2. As to expression, expressed in skin Langerhans cells and their emigrated counterparts in draining lymph nodes. Highly expressed in circulating leukocytes.

The protein resides in the cytoplasm. It localises to the nucleus matrix. It is found in the nucleus membrane. Its subcellular location is the perinuclear region. The protein localises to the cytosol. The protein resides in the nucleus envelope. It localises to the nucleus intermembrane space. The catalysed reaction is (5Z,8Z,11Z,14Z)-eicosatetraenoate + O2 = (5S)-hydroperoxy-(6E,8Z,11Z,14Z)-eicosatetraenoate. It carries out the reaction (5Z,8Z,11Z,14Z)-eicosatetraenoate + O2 = leukotriene A4 + H2O. The enzyme catalyses (5Z,8Z,11Z,14Z)-eicosatetraenoate + O2 = (8S)-hydroperoxy-(5Z,9E,11Z,14Z)-eicosatetraenoate. It catalyses the reaction (5Z,8Z,11Z,14Z)-eicosatetraenoate + O2 = (12S)-hydroperoxy-(5Z,8Z,10E,14Z)-eicosatetraenoate. The catalysed reaction is 18-HEPE + O2 = (5S)-hydroperoxy-18-hydroxy-(7E,9E,11Z,14Z,16E)-eicosapentaenoate. It carries out the reaction (18R)-hydroxy-(5Z,8Z,11Z,14Z,16E)-eicosapentaenoate + O2 = (5S)-hydroperoxy-(18R)-hydroxy-(6E,8Z,11Z,14Z,16E)-eicosapentaenoate. The enzyme catalyses (18S)-hydroxy-(5Z,8Z,11Z,14Z,16E)-eicosapentaenoate + O2 = (5S)-hydroperoxy-(18S)-hydroxy-(6E,8Z,11Z,14Z,16E)-eicosapentaenoate. It catalyses the reaction (5S)-hydroperoxy-(18S)-hydroxy-(6E,8Z,11Z,14Z,16E)-eicosapentaenoate = (5S,6S)-epoxy-(18S)-hydroxy-(7E,9E,11Z,14Z,16E)-eicosapentaenoate + H2O. The catalysed reaction is (5S)-hydroperoxy-(18R)-hydroxy-(6E,8Z,11Z,14Z,16E)-eicosapentaenoate = (5S,6S)-epoxy-(18R)-hydroxy-(7E,9E,11Z,14Z,16E)-eicosapentaenoate + H2O. It carries out the reaction (5S)-hydroperoxy-18-hydroxy-(7E,9E,11Z,14Z,16E)-eicosapentaenoate = (5S,6S)-epoxy-18-hydroxy-(7E,9E,11Z,14Z,16E)-eicosapentaenoate + H2O. The enzyme catalyses (15S)-hydroxy-(5Z,8Z,11Z,13E)-eicosatetraenoate + O2 = (5S)-hydroperoxy-(15S)-hydroxy-(6E,8Z,11Z,13E)-eicosatetraenoate. It catalyses the reaction (5S)-hydroperoxy-(6E,8Z,11Z,14Z)-eicosatetraenoate = leukotriene A4 + H2O. The catalysed reaction is (5Z,8Z)-eicosadienoate + O2 = (5S)-hydroperoxy-(6E,8Z)-eicosadienoate. It carries out the reaction (12S)-hydroxy-(5Z,8Z,10E,14Z)-eicosatetraenoate + O2 = (5S)-hydroperoxy-(12S)-hydroxy-(6E,8Z,10E,14Z)-eicosatetraenoate. The enzyme catalyses (5Z,8Z,11Z,14Z,17Z)-eicosapentaenoate + O2 = 5-hydroperoxy-(6E,8Z,11Z,14Z,17Z)-eicosapentaenoate. It catalyses the reaction (4Z,7Z,10Z,13Z,16Z,19Z)-docosahexaenoate + O2 = (14S)-hydroperoxy-(4Z,7Z,10Z,12E,16Z,19Z)-docosahexaenoate. The catalysed reaction is (4Z,7Z,10Z,13Z,16Z,19Z)-docosahexaenoate + O2 = (7S)-hydroperoxy-(4Z,8E,10Z,13Z,16Z,19Z)-docosahexaenoate. It carries out the reaction (4Z,7Z,10Z,13Z,16Z,19Z)-docosahexaenoate + O2 = (17S)-hydroperoxy-(4Z,7Z,10Z,13Z,15E,19Z)-docosahexaenoate. The protein operates within lipid metabolism; leukotriene A4 biosynthesis. In terms of biological role, catalyzes the oxygenation of arachidonate to 5-hydroperoxyeicosatetraenoate (5-HPETE) followed by the dehydration to 5,6- epoxyeicosatetraenoate (Leukotriene A4/LTA4), the first two steps in the biosynthesis of leukotrienes, which are potent mediators of inflammation. Also catalyzes the oxygenation of arachidonic acid into 8-hydroperoxyicosatetraenoic acid (8-HPETE) and 12-hydroperoxyicosatetraenoic acid (12-HPETE). Displays lipoxin synthase activity being able to convert (15S)-HETE into a conjugate tetraene. Although arachidonate is the preferred substrate, this enzyme can also metabolize oxidized fatty acids derived from arachidonate such as (15S)-HETE, eicosapentaenoate (EPA) such as (18R)- and (18S)-HEPE or docosahexaenoate (DHA) which lead to the formation of specialized pro-resolving mediators (SPM) lipoxin and resolvins E and D respectively, therefore it participates in anti-inflammatory responses. Oxidation of DHA directly inhibits endothelial cell proliferation and sprouting angiogenesis via peroxisome proliferator-activated receptor gamma (PPARgamma). It does not catalyze the oxygenation of linoleic acid and does not convert (5S)-HETE to lipoxin isomers. In addition to inflammatory processes, participates in dendritic cell migration, wound healing through an antioxidant mechanism based on heme oxygenase-1 (HO-1) regulation expression, monocyte adhesion to the endothelium via ITGAM expression on monocytes. Moreover, it helps establish an adaptive humoral immunity by regulating primary resting B cells and follicular helper T cells and participates in the CD40-induced production of reactive oxygen species (ROS) after CD40 ligation in B cells through interaction with PIK3R1 that bridges ALOX5 with CD40. May also play a role in glucose homeostasis, regulation of insulin secretion and palmitic acid-induced insulin resistance via AMPK. Can regulate bone mineralization and fat cell differentiation increases in induced pluripotent stem cells. In Mus musculus (Mouse), this protein is Polyunsaturated fatty acid 5-lipoxygenase.